Reading from the N-terminus, the 78-residue chain is Acyl carrier protein AcpP (78 aa).

Residues 2 to 77 form the Carrier domain; the sequence is SDTAERVKKI…DAVKYIDKAS (76 aa). O-(pantetheine 4'-phosphoryl)serine is present on Ser37.

It belongs to the acyl carrier protein (ACP) family. Post-translationally, 4'-phosphopantetheine is transferred from CoA to a specific serine of apo-ACP by AcpS. This modification is essential for activity because fatty acids are bound in thioester linkage to the sulfhydryl of the prosthetic group.

It localises to the cytoplasm. It functions in the pathway lipid metabolism; fatty acid biosynthesis. Carrier of the growing fatty acid chain in fatty acid biosynthesis. This is Acyl carrier protein AcpP from Mesorhizobium japonicum (strain LMG 29417 / CECT 9101 / MAFF 303099) (Mesorhizobium loti (strain MAFF 303099)).